The sequence spans 295 residues: Cyclin-G1 (295 aa).

The protein belongs to the cyclin family. Cyclin G subfamily.

It is found in the nucleus. May play a role in growth regulation. Is associated with G2/M phase arrest in response to DNA damage. May be an intermediate by which p53 mediates its role as an inhibitor of cellular proliferation. In Sus scrofa (Pig), this protein is Cyclin-G1 (CCNG1).